The primary structure comprises 1233 residues: Anion exchange protein 3 (1233 aa).

Residues 1–11 (MANGVIPPPGG) show a composition bias toward pro residues. Disordered regions lie at residues 1 to 320 (MANG…RRPH) and 431 to 500 (DDKD…DGHR). Topologically, residues 1–709 (MANGVIPPPG…DLRDALHSQC (709 aa)) are cytoplasmic. Positions 58–73 (DPEKPSRSFSERDFAF) are enriched in basic and acidic residues. Composition is skewed to basic residues over residues 74–97 (HRHI…KLRR) and 104–113 (RHTRRKRKKE). The span at 137 to 153 (GEEEEEEEEEGESETEA) shows a compositional bias: acidic residues. 4 positions are modified to phosphoserine: Ser168, Ser171, Ser176, and Ser199. Positions 201–216 (QRSVSSSSPRARAPRV) are enriched in low complexity. Residues 268 to 290 (DDMKSHRLEDNPGVRRHLVKEPS) show a composition bias toward basic and acidic residues. The residue at position 296 (Arg296) is an Omega-N-methylarginine. A compositionally biased stretch (low complexity) spans 437 to 450 (SFPRNPSSSSVNSV). The span at 482–500 (HDPDAKERPLHMPGGDGHR) shows a compositional bias: basic and acidic residues. The next 4 membrane-spanning stretches (helical) occupy residues 710-732 (VAAV…GLLG), 738-775 (LMGV…LLVF), 795-817 (VWVG…TFLV), and 827-848 (IFAF…YKVF). Positions 710 to 1233 (VAAVLFIYFA…DEYNELHMPV (524 aa)) are membrane (anion exchange). Asn874 carries N-linked (GlcNAc...) asparagine glycosylation. Residues 894-911 (ALLSLILMLGTFLIAFFL) form a helical membrane-spanning segment. Topologically, residues 912 to 926 (RKFRNSRFLGGKARR) are cytoplasmic. A run of 5 helical transmembrane segments spans residues 927-947 (IIGD…DYSI), 981-1003 (PFPP…LIFM), 1029-1050 (LLLI…LTAA), 1084-1129 (VTGV…IQLS), and 1156-1192 (MHLF…TVPL). Cys1166 is lipidated: S-palmitoyl cysteine.

Belongs to the anion exchanger (TC 2.A.31) family.

It localises to the cell membrane. The catalysed reaction is hydrogencarbonate(in) + chloride(out) = hydrogencarbonate(out) + chloride(in). Functionally, sodium-independent anion exchanger which mediates the electroneutral exchange of chloride for bicarbonate ions across the cell membrane. May be involved in the regulation of intracellular pH, and the modulation of cardiac action potential. In Oryctolagus cuniculus (Rabbit), this protein is Anion exchange protein 3 (SLC4A3).